The sequence spans 197 residues: Large ribosomal subunit protein uL5 (197 aa).

The protein belongs to the universal ribosomal protein uL5 family. As to quaternary structure, part of the 50S ribosomal subunit; contacts the 5S rRNA and probably tRNA. Forms a bridge to the 30S subunit in the 70S ribosome.

In terms of biological role, this is one of the proteins that bind and probably mediate the attachment of the 5S RNA into the large ribosomal subunit, where it forms part of the central protuberance. In the 70S ribosome it contacts protein S13 of the 30S subunit (bridge B1b), connecting the 2 subunits; this bridge is implicated in subunit movement. May contact the P site tRNA; the 5S rRNA and some of its associated proteins might help stabilize positioning of ribosome-bound tRNAs. The sequence is that of Large ribosomal subunit protein uL5 from Caldivirga maquilingensis (strain ATCC 700844 / DSM 13496 / JCM 10307 / IC-167).